Reading from the N-terminus, the 137-residue chain is Large ribosomal subunit protein uL16 (137 aa).

This sequence belongs to the universal ribosomal protein uL16 family. In terms of assembly, part of the 50S ribosomal subunit.

Binds 23S rRNA and is also seen to make contacts with the A and possibly P site tRNAs. The sequence is that of Large ribosomal subunit protein uL16 from Lactococcus lactis subsp. cremoris (strain SK11).